Here is a 500-residue protein sequence, read N- to C-terminus: ATP synthase subunit alpha (500 aa).

ATP is bound at residue 169-176 (GDRQTGKT).

It belongs to the ATPase alpha/beta chains family. As to quaternary structure, F-type ATPases have 2 components, CF(1) - the catalytic core - and CF(0) - the membrane proton channel. CF(1) has five subunits: alpha(3), beta(3), gamma(1), delta(1), epsilon(1). CF(0) has three main subunits: a(1), b(2) and c(9-12). The alpha and beta chains form an alternating ring which encloses part of the gamma chain. CF(1) is attached to CF(0) by a central stalk formed by the gamma and epsilon chains, while a peripheral stalk is formed by the delta and b chains.

It is found in the cell inner membrane. It catalyses the reaction ATP + H2O + 4 H(+)(in) = ADP + phosphate + 5 H(+)(out). Functionally, produces ATP from ADP in the presence of a proton gradient across the membrane. The alpha chain is a regulatory subunit. This chain is ATP synthase subunit alpha, found in Fusobacterium nucleatum subsp. nucleatum (strain ATCC 25586 / DSM 15643 / BCRC 10681 / CIP 101130 / JCM 8532 / KCTC 2640 / LMG 13131 / VPI 4355).